The following is a 513-amino-acid chain: Cyclin-dependent kinase C-2 (513 aa).

The Protein kinase domain occupies Phe-26 to Phe-325. ATP-binding positions include Ile-32 to Val-40 and Lys-55. Phosphotyrosine is present on Tyr-37. Asp-164 serves as the catalytic Proton acceptor. Thr-198 bears the Phosphothreonine mark. Residues Leu-337–Pro-513 are disordered. The span at Ala-395–Asn-404 shows a compositional bias: low complexity. Residues Ser-434–Gly-448 are compositionally biased toward polar residues. Gly residues-rich tracts occupy residues Ala-461–Val-476 and Gln-483–Arg-496.

The protein belongs to the protein kinase superfamily. CMGC Ser/Thr protein kinase family. CDC2/CDKX subfamily. In terms of assembly, interacts with CYCT1-3. As to expression, highly expressed in flowers. Expressed in seedlings, roots, rosettes and stems.

It carries out the reaction L-seryl-[protein] + ATP = O-phospho-L-seryl-[protein] + ADP + H(+). The enzyme catalyses L-threonyl-[protein] + ATP = O-phospho-L-threonyl-[protein] + ADP + H(+). It catalyses the reaction [DNA-directed RNA polymerase] + ATP = phospho-[DNA-directed RNA polymerase] + ADP + H(+). In Arabidopsis thaliana (Mouse-ear cress), this protein is Cyclin-dependent kinase C-2 (CDKC-2).